The primary structure comprises 473 residues: UDP-glycosyltransferase 71A27 (473 aa).

The Proton acceptor role is filled by His-15. His-15 lines the an anthocyanidin pocket. Asp-117 acts as the Charge relay in catalysis. Residues Ala-345, Gln-347, His-362, Trp-365, Asn-366, Ser-367, and Glu-370 each contribute to the UDP-alpha-D-glucose site. Residue Gly-385 coordinates an anthocyanidin. UDP-alpha-D-glucose is bound by residues Glu-386 and Gln-387.

This sequence belongs to the UDP-glycosyltransferase family.

The catalysed reaction is (20S)-protopanaxadiol + UDP-alpha-D-glucose = (20S)-ginsenoside C-K + UDP + H(+). It functions in the pathway secondary metabolite biosynthesis; terpenoid biosynthesis. In terms of biological role, component of the triterpene saponins (e.g. PPD-type ginsenosides or panaxosides) biosynthetic pathways. Glycosyltransferase that catalyzes the biosynthesis of compound K from protopanaxadiol (PPD). This chain is UDP-glycosyltransferase 71A27, found in Panax ginseng (Korean ginseng).